Consider the following 255-residue polypeptide: Post-GPI attachment to proteins factor 2 (255 aa).

Transmembrane regions (helical) follow at residues 25–45 (LAAL…SLLF), 80–100 (LAIF…LEYY), 111–131 (LGIL…CLSF), 143–163 (NAFV…YLLN), 185–205 (LFLV…RHNA), and 209–229 (AGVY…NMGF).

The protein belongs to the PGAP2 family.

The protein localises to the golgi apparatus membrane. Its subcellular location is the endoplasmic reticulum membrane. Involved in the lipid remodeling steps of GPI-anchor maturation. Required for stable expression of GPI-anchored proteins at the cell surface. In Drosophila pseudoobscura pseudoobscura (Fruit fly), this protein is Post-GPI attachment to proteins factor 2.